We begin with the raw amino-acid sequence, 852 residues long: Protein Shroom1 (852 aa).

Methionine 1 bears the N-acetylmethionine mark. Serine 18 carries the phosphoserine modification. 3 disordered regions span residues serine 34–leucine 54, threonine 81–arginine 109, and alanine 125–glutamine 218. Threonine 103 is modified (phosphothreonine). Residues alanine 125–arginine 144 show a composition bias toward low complexity. A phosphoserine mark is found at serine 133 and serine 137. The ASD1 domain occupies leucine 145–glycine 233. Residues valine 152–arginine 164 are compositionally biased toward basic and acidic residues. Residues serine 166, serine 190, and serine 224 each carry the phosphoserine modification. Disordered regions lie at residues leucine 276–glycine 320, methionine 399–glycine 431, serine 464–glutamate 496, and aspartate 823–threonine 852. Polar residues predominate over residues threonine 279 to serine 289. Positions alanine 301–glycine 313 are enriched in low complexity. Positions arginine 465–isoleucine 479 are enriched in polar residues. In terms of domain architecture, ASD2 spans glutamate 543–glycine 825. Positions serine 830–threonine 852 are enriched in pro residues.

The protein belongs to the shroom family. As to quaternary structure, interacts with F-actin.

The protein localises to the cytoplasm. The protein resides in the cytoskeleton. Functionally, may be involved in the assembly of microtubule arrays during cell elongation. The protein is Protein Shroom1 (SHROOM1) of Homo sapiens (Human).